The following is a 208-amino-acid chain: Protein-L-isoaspartate O-methyltransferase (208 aa).

S59 is an active-site residue.

It belongs to the methyltransferase superfamily. L-isoaspartyl/D-aspartyl protein methyltransferase family.

Its subcellular location is the cytoplasm. The catalysed reaction is [protein]-L-isoaspartate + S-adenosyl-L-methionine = [protein]-L-isoaspartate alpha-methyl ester + S-adenosyl-L-homocysteine. In terms of biological role, catalyzes the methyl esterification of L-isoaspartyl residues in peptides and proteins that result from spontaneous decomposition of normal L-aspartyl and L-asparaginyl residues. It plays a role in the repair and/or degradation of damaged proteins. This is Protein-L-isoaspartate O-methyltransferase from Aliivibrio salmonicida (strain LFI1238) (Vibrio salmonicida (strain LFI1238)).